Consider the following 172-residue polypeptide: MKLLNSLILLVLTCLVSSINTQFISIQKYDFSGNCKNSSDSASSFEASSESAAICMQNDLLSGIVTNEGVCLIFNEIPTTFLISSNGDYVVILLEIEQLKLVNVLLSVLMITTEVHIYFQLKHLSITHLIPTLKYLTMANVMDNGKLVLTIFNITLSINVMLHMKLKLIPFL.

The first 21 residues, 1–21, serve as a signal peptide directing secretion; the sequence is MKLLNSLILLVLTCLVSSINT. N-linked (GlcNAc...) asparagine glycans are attached at residues Asn37 and Asn153.

Its subcellular location is the secreted. This Dictyostelium discoideum (Social amoeba) protein is Counting factor-associated protein B (cfaB).